We begin with the raw amino-acid sequence, 217 residues long: Probable GTP-binding protein EngB (217 aa).

The 178-residue stretch at 37–214 (SGLEVAFAGR…RAAMARLIGD (178 aa)) folds into the EngB-type G domain. GTP-binding positions include 45-52 (GRSNVGKS), 72-76 (GRTQE), 92-95 (DMPG), 159-162 (TKAD), and 193-195 (TSS). 2 residues coordinate Mg(2+): Ser-52 and Thr-74.

Belongs to the TRAFAC class TrmE-Era-EngA-EngB-Septin-like GTPase superfamily. EngB GTPase family. Mg(2+) serves as cofactor.

In terms of biological role, necessary for normal cell division and for the maintenance of normal septation. The sequence is that of Probable GTP-binding protein EngB from Nitrobacter winogradskyi (strain ATCC 25391 / DSM 10237 / CIP 104748 / NCIMB 11846 / Nb-255).